We begin with the raw amino-acid sequence, 211 residues long: Endonuclease V (211 aa).

Asp-37 and Asp-102 together coordinate Mg(2+).

Belongs to the endonuclease V family. Mg(2+) is required as a cofactor.

The protein resides in the cytoplasm. The catalysed reaction is Endonucleolytic cleavage at apurinic or apyrimidinic sites to products with a 5'-phosphate.. Functionally, DNA repair enzyme involved in the repair of deaminated bases. Selectively cleaves double-stranded DNA at the second phosphodiester bond 3' to a deoxyinosine leaving behind the intact lesion on the nicked DNA. The sequence is that of Endonuclease V from Ignicoccus hospitalis (strain KIN4/I / DSM 18386 / JCM 14125).